The chain runs to 329 residues: 2-oxoglutarate-dependent dioxygenase htyE (329 aa).

Residues 175–289 (NTSELRLLHY…RYSVAYFGKP (115 aa)) enclose the Fe2OG dioxygenase domain. Residues His201, Asp203, and His261 each contribute to the Fe cation site. Arg280 provides a ligand contact to 2-oxoglutarate.

The protein belongs to the iron/ascorbate-dependent oxidoreductase family. Requires Fe(2+) as cofactor.

Its pathway is antifungal biosynthesis. 2-oxoglutarate-dependent dioxygenase; part of the gene cluster that mediates the de novo generation of L-homotyrosine from acetyl-CoA and 4-hydroxyphenyl-pyruvate. L-homotyrosine is a building block of echinocandin B, a fungal lipidated cyclic hexapeptide that acts as an antifungal agent. L-homotyrosine 4-hydroxyphenyl-pyruvate first undergoes an aldol-type condensation by htyA with the C-2 of acetyl-CoA followed by the release of CoA to form 2-(4-hydroxybenzyl)-malate. This is followed by isomerization of 2-(4-hydroxy-benzyl)-malate to 3-(4-hydroxybenzyl)-malate by htyD. Thereafter, 3-(4-hydroxybenzyl)-malate undergoes decarboxylation and oxidation to form 2-oxo-4-(4-hydroxybenzyl)butanoic acid, coupled to reduction of NAD(+) to NADH by htyC. The product then undergoes transamination catalyzed by htyB to form L-homotyrosine. This Aspergillus rugulosus (Emericella rugulosa) protein is 2-oxoglutarate-dependent dioxygenase htyE.